The following is a 207-amino-acid chain: N-(5'-phosphoribosyl)anthranilate isomerase (207 aa).

This sequence belongs to the TrpF family.

It catalyses the reaction N-(5-phospho-beta-D-ribosyl)anthranilate = 1-(2-carboxyphenylamino)-1-deoxy-D-ribulose 5-phosphate. It participates in amino-acid biosynthesis; L-tryptophan biosynthesis; L-tryptophan from chorismate: step 3/5. The polypeptide is N-(5'-phosphoribosyl)anthranilate isomerase (Legionella pneumophila (strain Lens)).